Here is a 318-residue protein sequence, read N- to C-terminus: Probable cell division protein WhiA (318 aa).

The segment at residues 281 to 314 (SLKELGEMLSPPVGKSGVNHRLRRIEKIAEELSK) is a DNA-binding region (H-T-H motif).

This sequence belongs to the WhiA family.

In terms of biological role, involved in cell division and chromosome segregation. In Clostridium tetani (strain Massachusetts / E88), this protein is Probable cell division protein WhiA.